Reading from the N-terminus, the 891-residue chain is DNA mismatch repair protein MutS (891 aa).

632–639 provides a ligand contact to ATP; sequence GPNMAGKS.

The protein belongs to the DNA mismatch repair MutS family.

In terms of biological role, this protein is involved in the repair of mismatches in DNA. It is possible that it carries out the mismatch recognition step. This protein has a weak ATPase activity. The protein is DNA mismatch repair protein MutS of Rhodopirellula baltica (strain DSM 10527 / NCIMB 13988 / SH1).